Consider the following 324-residue polypeptide: Polyprenol dehydrogenase (324 aa).

Y206 (proton acceptor) is an active-site residue. Y206, K210, and T243 together coordinate NAD(+).

This sequence belongs to the short-chain dehydrogenases/reductases (SDR) family.

Its subcellular location is the lipid droplet. It carries out the reaction a di-trans,poly-cis-polyprenol + NAD(+) = a di-trans,poly-cis-polyprenal + NADH + H(+). The catalysed reaction is a di-trans,poly-cis-polyprenol + NADP(+) = a di-trans,poly-cis-polyprenal + NADPH + H(+). It catalyses the reaction a di-trans,poly-cis-dolichol + NADP(+) = a di-trans,poly-cis-dolichal + NADPH + H(+). The enzyme catalyses a di-trans,poly-cis-dolichol + NAD(+) = a di-trans,poly-cis-dolichal + NADH + H(+). It participates in protein modification; protein glycosylation. Functionally, oxidoreductase that plays a key role in early steps of protein N-linked glycosylation by mediating two non-consecutive steps in dolichol biosynthesis. Acts both as a NAD(+)-dependent dehydrogenase and as a NADPH-dependent reductase during the conversion of polyprenol into dolichol. First catalyzes the NAD(+)-dependent dehydrogenation of polyprenol into polyprenal; polyprenal is then reduced into dolichal by srd5a3. It then catalyzes the NADPH-dependent reduction of dolichal into dolichol. This Danio rerio (Zebrafish) protein is Polyprenol dehydrogenase.